The primary structure comprises 617 residues: Acyl-CoA dehydrogenase family member 11 (617 aa).

A disordered region spans residues 1–47 (MHRIGNAVRMASSSSANATITARHTQYSHAKTGGFSQTGPTLHNPYK). Residues 11-22 (ASSSSANATITA) show a composition bias toward low complexity. Over residues 23–41 (RHTQYSHAKTGGFSQTGPT) the composition is skewed to polar residues. Residues 206–215 (QWMTEKKGGS) and 241–243 (FSS) each bind FAD. Ser215 contacts substrate. Substrate contacts are provided by Ser267 and Arg334. Residues Arg359, 366–369 (QSKW), Glu437, Gly441, and 464–466 (EGT) each bind FAD.

This sequence belongs to the acyl-CoA dehydrogenase family. In terms of assembly, homotetramer; dimer of dimers.

Promotes adaption to elevated temperatures by regulating expression of the lipid desaturase, fat-7. Binds selectively and with high affinity to fatty acids with chain lengths from C10 to C12 and prevents them from activating fat-7 expression mediated by the nuclear hormone receptor nhr-49, leading to low levels of membrane lipid desaturation and membrane fluidity for adaption to heat. The polypeptide is Acyl-CoA dehydrogenase family member 11 (Caenorhabditis elegans).